The sequence spans 476 residues: Casein kinase 1-like protein 7 (476 aa).

The region spanning 9–278 is the Protein kinase domain; the sequence is FKLGKKIGSG…LKRLFRDLFI (270 aa). ATP is bound by residues 15-23 and Lys38; that span reads IGSGSFGEL. The Proton acceptor role is filled by Asp128. 2 disordered regions span residues 299-324 and 340-464; these read GSSS…DPIE and PGAV…TRED. A compositionally biased stretch (basic and acidic residues) spans 357-367; that stretch reads PRDRSRSRNSD. Over residues 382 to 422 the composition is skewed to low complexity; sequence ANSSSRYRASSSRKAVAASSSRPSSAGGPSESRTSSRLVSS. Positions 423–432 are enriched in gly residues; it reads SGGGGSGSGN.

It belongs to the protein kinase superfamily. CK1 Ser/Thr protein kinase family. Casein kinase I subfamily. In terms of assembly, monomer. In terms of processing, autophosphorylated.

It is found in the cytoplasm. It carries out the reaction L-seryl-[protein] + ATP = O-phospho-L-seryl-[protein] + ADP + H(+). The catalysed reaction is L-threonyl-[protein] + ATP = O-phospho-L-threonyl-[protein] + ADP + H(+). Functionally, casein kinases are operationally defined by their preferential utilization of acidic proteins such as caseins as substrates. It can phosphorylate a large number of proteins. The protein is Casein kinase 1-like protein 7 of Arabidopsis thaliana (Mouse-ear cress).